The sequence spans 142 residues: Large ribosomal subunit protein uL13 (142 aa).

The protein belongs to the universal ribosomal protein uL13 family. Part of the 50S ribosomal subunit.

In terms of biological role, this protein is one of the early assembly proteins of the 50S ribosomal subunit, although it is not seen to bind rRNA by itself. It is important during the early stages of 50S assembly. This is Large ribosomal subunit protein uL13 from Pseudomonas putida (strain W619).